The chain runs to 263 residues: Dermonecrotic toxin SpaSicTox-betaIF1 (263 aa).

Residues E15 and D17 each coordinate Mg(2+). H31 functions as the Nucleophile in the catalytic mechanism. Cystine bridges form between C35–C41 and C37–C179. D75 contacts Mg(2+).

Belongs to the arthropod phospholipase D family. Class II subfamily. It depends on Mg(2+) as a cofactor. Expressed by the venom gland.

The protein localises to the secreted. It catalyses the reaction an N-(acyl)-sphingosylphosphocholine = an N-(acyl)-sphingosyl-1,3-cyclic phosphate + choline. It carries out the reaction an N-(acyl)-sphingosylphosphoethanolamine = an N-(acyl)-sphingosyl-1,3-cyclic phosphate + ethanolamine. The enzyme catalyses a 1-acyl-sn-glycero-3-phosphocholine = a 1-acyl-sn-glycero-2,3-cyclic phosphate + choline. The catalysed reaction is a 1-acyl-sn-glycero-3-phosphoethanolamine = a 1-acyl-sn-glycero-2,3-cyclic phosphate + ethanolamine. Dermonecrotic toxins cleave the phosphodiester linkage between the phosphate and headgroup of certain phospholipids (sphingolipid and lysolipid substrates), forming an alcohol (often choline) and a cyclic phosphate. This toxin acts on sphingomyelin (SM). It may also act on ceramide phosphoethanolamine (CPE), lysophosphatidylcholine (LPC) and lysophosphatidylethanolamine (LPE), but not on lysophosphatidylserine (LPS), and lysophosphatidylglycerol (LPG). It acts by transphosphatidylation, releasing exclusively cyclic phosphate products as second products. Induces dermonecrosis, hemolysis, increased vascular permeability, edema, inflammatory response, and platelet aggregation. The sequence is that of Dermonecrotic toxin SpaSicTox-betaIF1 from Sicarius patagonicus (Six-eyed sand spider).